Here is a 492-residue protein sequence, read N- to C-terminus: MAAGERSWCLCKLLRFFYSLFFPGLIVCGTLCVCLVIVLWGIRLLLQRKKKLVSTSKNGKNQMVIAFFHPYCNAGGGGERVLWCALRALQKKYPEAVYVVYTGDVNVNGQQILEGAFRRFNIRLIHPVQFVFLRKRYLVEDSLYPHFTLLGQSLGSIFLGWEALMQCVPDVYIDSMGYAFTLPLFKYIGGCQVGSYVHYPTISTDMLSVVKNQNIGFNNAAFITRNPFLSKVKLIYYYLFAFIYGLVGSCSDVVMVNSSWTLNHILSLWKVGNCTNIVYPPCDVQTFLDIPLHEKKMTPGHLLVSVGQFRPEKNHPLQIRAFAKLLNKKMVESPPSLKLVLIGGCRNKDDELRVNQLRRLSEDLGVQEYVEFKINIPFDELKNYLSEATIGLHTMWNEHFGIGVVECMAAGTIILAHNSGGPKLDIVVPHEGDITGFLAESEEDYAETIAHILSMSAEKRLQIRKSARASVSRFSDQEFEVTFLSSVEKLFK.

Over 1 to 19 the chain is Lumenal; it reads MAAGERSWCLCKLLRFFYS. A helical membrane pass occupies residues 20 to 40; the sequence is LFFPGLIVCGTLCVCLVIVLW. At 41-233 the chain is on the cytoplasmic side; that stretch reads GIRLLLQRKK…TRNPFLSKVK (193 aa). Positions 234–254 form an intramembrane region, helical; the sequence is LIYYYLFAFIYGLVGSCSDVV. Residues 255–399 lie on the Cytoplasmic side of the membrane; sequence MVNSSWTLNH…IGLHTMWNEH (145 aa). An intramembrane region (helical) is located at residues 400–420; the sequence is FGIGVVECMAAGTIILAHNSG. The Cytoplasmic segment spans residues 421-492; the sequence is GPKLDIVVPH…FLSSVEKLFK (72 aa).

The protein belongs to the glycosyltransferase group 1 family. Glycosyltransferase 4 subfamily.

Its subcellular location is the endoplasmic reticulum membrane. The catalysed reaction is an alpha-D-Man-(1-&gt;3)-[alpha-D-Man-(1-&gt;6)]-beta-D-Man-(1-&gt;4)-beta-D-GlcNAc-(1-&gt;4)-alpha-D-GlcNAc-diphospho-di-trans,poly-cis-dolichol + 2 GDP-alpha-D-mannose = an alpha-D-Man-(1-&gt;2)-alpha-D-Man-(1-&gt;2)-alpha-D-Man-(1-&gt;3)-[alpha-D-Man-(1-&gt;6)]-beta-D-Man-(1-&gt;4)-beta-D-GlcNAc-(1-&gt;4)-alpha-D-GlcNAc-diphospho-di-trans,poly-cis-dolichol + 2 GDP + 2 H(+). The protein operates within protein modification; protein glycosylation. GDP-Man:Man(3)GlcNAc(2)-PP-Dol alpha-1,2-mannosyltransferase that operates in the biosynthetic pathway of dolichol-linked oligosaccharides, the glycan precursors employed in protein asparagine (N)-glycosylation. The assembly of dolichol-linked oligosaccharides begins on the cytosolic side of the endoplasmic reticulum membrane and finishes in its lumen. The sequential addition of sugars to dolichol pyrophosphate produces dolichol-linked oligosaccharides containing fourteen sugars, including two GlcNAcs, nine mannoses and three glucoses. Once assembled, the oligosaccharide is transferred from the lipid to nascent proteins by oligosaccharyltransferases. Catalyzes, on the cytoplasmic face of the endoplasmic reticulum, the addition of the fourth and fifth mannose residues to the dolichol-linked oligosaccharide chain, to produce Man(5)GlcNAc(2)-PP-dolichol core oligosaccharide. Man(5)GlcNAc(2)-PP-dolichol is a substrate for ALG3, the following enzyme in the biosynthetic pathway. The chain is GDP-Man:Man(3)GlcNAc(2)-PP-Dol alpha-1,2-mannosyltransferase from Homo sapiens (Human).